A 303-amino-acid polypeptide reads, in one-letter code: Aspartate carbamoyltransferase catalytic subunit (303 aa).

Arg-51 and Thr-52 together coordinate carbamoyl phosphate. Lys-80 contributes to the L-aspartate binding site. Positions 101, 129, and 132 each coordinate carbamoyl phosphate. Arg-162 and Arg-221 together coordinate L-aspartate. Leu-260 and Pro-261 together coordinate carbamoyl phosphate.

Belongs to the aspartate/ornithine carbamoyltransferase superfamily. ATCase family. Heterooligomer of catalytic and regulatory chains.

It carries out the reaction carbamoyl phosphate + L-aspartate = N-carbamoyl-L-aspartate + phosphate + H(+). It functions in the pathway pyrimidine metabolism; UMP biosynthesis via de novo pathway; (S)-dihydroorotate from bicarbonate: step 2/3. Functionally, catalyzes the condensation of carbamoyl phosphate and aspartate to form carbamoyl aspartate and inorganic phosphate, the committed step in the de novo pyrimidine nucleotide biosynthesis pathway. The polypeptide is Aspartate carbamoyltransferase catalytic subunit (Saccharolobus islandicus (strain M.16.27) (Sulfolobus islandicus)).